Here is an 872-residue protein sequence, read N- to C-terminus: Alanine--tRNA ligase (872 aa).

Residues His567, His571, Cys669, and His673 each coordinate Zn(2+).

This sequence belongs to the class-II aminoacyl-tRNA synthetase family. Zn(2+) is required as a cofactor.

It localises to the cytoplasm. It carries out the reaction tRNA(Ala) + L-alanine + ATP = L-alanyl-tRNA(Ala) + AMP + diphosphate. In terms of biological role, catalyzes the attachment of alanine to tRNA(Ala) in a two-step reaction: alanine is first activated by ATP to form Ala-AMP and then transferred to the acceptor end of tRNA(Ala). Also edits incorrectly charged Ser-tRNA(Ala) and Gly-tRNA(Ala) via its editing domain. In Streptococcus agalactiae serotype III (strain NEM316), this protein is Alanine--tRNA ligase.